Reading from the N-terminus, the 147-residue chain is Cyanate hydratase (147 aa).

Residues R88, E91, and S114 contribute to the active site.

This sequence belongs to the cyanase family.

The catalysed reaction is cyanate + hydrogencarbonate + 3 H(+) = NH4(+) + 2 CO2. In terms of biological role, catalyzes the reaction of cyanate with bicarbonate to produce ammonia and carbon dioxide. This is Cyanate hydratase from Prochlorococcus marinus subsp. pastoris (strain CCMP1986 / NIES-2087 / MED4).